Consider the following 550-residue polypeptide: Thioredoxin domain-containing protein 2 (550 aa).

Positions 1 to 50 (MFKKNQKLSKDKGLEVNSVQAGAPEESDVKLNNGGKANERGSNEFLDTAQ) are disordered. Ser-42 and Ser-51 each carry phosphoserine. Residues 63 to 428 (MLHMSTEESE…IKSSEDVQPS (366 aa)) form a disordered region. Polar residues-rich tracts occupy residues 73–87 (PPQQ…SENT), 96–105 (PKSSTKNTQL), and 112–140 (KTSS…QGST). 22 consecutive repeat copies span residues 104 to 118 (QLKQ…SYSK), 119 to 133 (QTNS…AITT), 134 to 148 (YPKQ…ANGT), 149 to 163 (HDRE…EDLI), 164 to 178 (QSKK…EDSI), 179 to 193 (QSKK…EDPI), 194 to 208 (QSKK…EDTI), 209 to 223 (QSKN…EDPI), 224 to 238 (QSKK…EDSI), 239 to 252 (QSKK…SDTI), 253 to 267 (QSKE…QDTI), 268 to 282 (QSKG…KDSM), 283 to 297 (KSKE…KDSI), 298 to 312 (QSKE…QDSA), 313 to 327 (QPKE…KDSL), 328 to 342 (PSKE…EDTI), 343 to 357 (QAKE…DTIQ), 358 to 384 (AKEE…EDTI), 385 to 399 (QAKE…DTMQ), 400 to 412 (SKEE…EDTV), 413 to 425 (QSQE…SEDV), and 426 to 440 (QPSE…AEIE). The interval 104–440 (QLKQEDISKT…EIFPFEAEIE (337 aa)) is 22 X 15 AA approximate tandem repeat of Q-P-K-X-G-D-I-P-K-S-[PS]-E-[KE]-X-I. Composition is skewed to basic and acidic residues over residues 148 to 205 (THDR…KSLE), 217 to 259 (KSSE…ESET), 277 to 304 (QVKD…ENKI), and 313 to 348 (QPKE…KEEI). Ser-158 is subject to Phosphoserine. 2 positions are modified to phosphoserine: Ser-351 and Ser-379. The 150-residue stretch at 401–550 (KEEITVSPED…KLEKSIAELK (150 aa)) folds into the Thioredoxin domain. Ser-407 is subject to Phosphoserine. A disulfide bridge links Cys-477 with Cys-480.

As to expression, testis-specific. Strongly expressed in the testicular seminiferous tubules, mostly in the round spermatids.

It is found in the cytoplasm. In terms of biological role, probably plays a regulatory role in sperm development. May participate in regulation of fibrous sheath (FS) assembly by supporting the formation of disulfide bonds during sperm tail morphogenesis. May also be required to rectify incorrect disulfide pairing and generate suitable pairs between the FS constituents. Can reduce disulfide bonds in vitro in the presence of NADP and thioredoxin reductase. The sequence is that of Thioredoxin domain-containing protein 2 (Txndc2) from Rattus norvegicus (Rat).